Consider the following 392-residue polypeptide: Protein trapped in endoderm-1 (392 aa).

Topologically, residues 1–39 (MDQDMGMATGYFQDADMQMDEPAAATQSIYPHSATLFAA) are extracellular. Residues 40-60 (ISACVFVTIGVLGNLITLLAL) form a helical membrane-spanning segment. Residues 61–73 (LKSPTIREHATTA) are Cytoplasmic-facing. Residues 74 to 94 (FVISLSISDLLFCSFSLPLTA) traverse the membrane as a helical segment. The Extracellular portion of the chain corresponds to 95–110 (VRFFQESWTFGTTLCK). A helical membrane pass occupies residues 111-131 (IFPVIFYGNVAVSLLSMVGIT). Residues 132–156 (LNRYILIACHSRYSQIYKPKFITLQ) lie on the Cytoplasmic side of the membrane. Residues 157–177 (LLFVWAVSFLLLLPPILGIWG) form a helical membrane-spanning segment. The Extracellular portion of the chain corresponds to 178–202 (EMGLDEATFSCTILKKEGRSIKKTL). A helical transmembrane segment spans residues 203–223 (FVIGFLLPCLVIIVSYSCIYI). The Cytoplasmic segment spans residues 224–268 (TVLHQKKKIRNHDNFQIAAAKGSSSSGGGSYMTTTCTRKAREDNR). Residues 269 to 289 (LTVMMVTIFLCFLVCFLPLML) form a helical membrane-spanning segment. At 290–302 (ANVVDDERNTSYP) the chain is on the extracellular side. N-linked (GlcNAc...) asparagine glycosylation is present at Asn298. A helical membrane pass occupies residues 303–323 (WLHIIASVMAWASSVINPIIY). Residues 324 to 392 (AASNRNYRVA…INQMCQTYSV (69 aa)) are Cytoplasmic-facing. Phosphoserine is present on residues Ser359, Ser362, and Ser366. Phosphothreonine is present on Thr372.

Belongs to the G-protein coupled receptor 1 family. In embryos, expression is seen at highest levels in the cuprophilic cells and at lower levels in the amnioserosa, developing CNS, cardiac mesoderm primordium and midline glia.

The protein localises to the cell membrane. In terms of biological role, essential for the first active step of germ cell migration: transepithelial migration of germ cells through the posterior midgut (PMG) epithelium. The sequence is that of Protein trapped in endoderm-1 (Tre1) from Drosophila melanogaster (Fruit fly).